An 87-amino-acid polypeptide reads, in one-letter code: Serine rich endogenous peptide 17 (87 aa).

An N-terminal signal peptide occupies residues 1-28 (MTGKAPFFVILIAALLLLSSFFFGEVKA). The segment at 32–87 (KQPKHRKLGNREGDENRSNEIVVQMKARVKRSKSKRGPQKKEPYKKPPCSPPTHPA) is disordered. A compositionally biased stretch (basic and acidic residues) spans 40 to 49 (GNREGDENRS). The SCOOP motif signature appears at 51 to 71 (EIVVQMKARVKRSKSKRGPQK). Basic residues predominate over residues 58–69 (ARVKRSKSKRGP). Residues 63 to 65 (SKS) carry the SxS motif essential for MIK2 binding motif. Over residues 77 to 87 (KPPCSPPTHPA) the composition is skewed to pro residues.

This sequence belongs to the serine rich endogenous peptide (SCOOP) phytocytokine family. In terms of assembly, interacts with MIK2 (via extracellular leucine-rich repeat domain); this interaction triggers the formation of complex between MIK2 and the BAK1/SERK3 and SERK4 coreceptors, and subsequent BAK1 activation by phosphorylation.

It localises to the cell membrane. The protein localises to the secreted. It is found in the extracellular space. The protein resides in the apoplast. Brassicaceae-specific phytocytokine (plant endogenous peptide released into the apoplast) perceived by MIK2 in a BAK1/SERK3 and SERK4 coreceptors-dependent manner, that modulates various physiological and antimicrobial processes including growth prevention and reactive oxygen species (ROS) response regulation. The polypeptide is Serine rich endogenous peptide 17 (Arabidopsis thaliana (Mouse-ear cress)).